A 344-amino-acid chain; its full sequence is Ketol-acid reductoisomerase (NADP(+)) (344 aa).

Positions 2–181 (AKVLYEKDIQ…GAARAGVLET (180 aa)) constitute a KARI N-terminal Rossmann domain. Residues 25–28 (YGSQ), R48, S52, and 82–85 (DEMQ) contribute to the NADP(+) site. Residue H107 is part of the active site. Residue G133 participates in NADP(+) binding. The region spanning 182–327 (SFQEETETDL…RELRELMPFV (146 aa)) is the KARI C-terminal knotted domain. Positions 190, 194, 226, and 230 each coordinate Mg(2+). A substrate-binding site is contributed by S251.

This sequence belongs to the ketol-acid reductoisomerase family. Mg(2+) serves as cofactor.

The enzyme catalyses (2R)-2,3-dihydroxy-3-methylbutanoate + NADP(+) = (2S)-2-acetolactate + NADPH + H(+). The catalysed reaction is (2R,3R)-2,3-dihydroxy-3-methylpentanoate + NADP(+) = (S)-2-ethyl-2-hydroxy-3-oxobutanoate + NADPH + H(+). It participates in amino-acid biosynthesis; L-isoleucine biosynthesis; L-isoleucine from 2-oxobutanoate: step 2/4. It functions in the pathway amino-acid biosynthesis; L-valine biosynthesis; L-valine from pyruvate: step 2/4. Functionally, involved in the biosynthesis of branched-chain amino acids (BCAA). Catalyzes an alkyl-migration followed by a ketol-acid reduction of (S)-2-acetolactate (S2AL) to yield (R)-2,3-dihydroxy-isovalerate. In the isomerase reaction, S2AL is rearranged via a Mg-dependent methyl migration to produce 3-hydroxy-3-methyl-2-ketobutyrate (HMKB). In the reductase reaction, this 2-ketoacid undergoes a metal-dependent reduction by NADPH to yield (R)-2,3-dihydroxy-isovalerate. The protein is Ketol-acid reductoisomerase (NADP(+)) of Oceanobacillus iheyensis (strain DSM 14371 / CIP 107618 / JCM 11309 / KCTC 3954 / HTE831).